Consider the following 345-residue polypeptide: L-threonine 3-dehydrogenase (345 aa).

Zn(2+) is bound at residue cysteine 39. Catalysis depends on charge relay system residues threonine 41 and histidine 44. The Zn(2+) site is built by histidine 64, glutamate 65, cysteine 94, cysteine 97, cysteine 100, and cysteine 108. NAD(+) contacts are provided by residues isoleucine 176, aspartate 196, arginine 201, 263 to 265, and 287 to 288; these read LGI and VY.

The protein belongs to the zinc-containing alcohol dehydrogenase family. Homotetramer. Requires Zn(2+) as cofactor.

It is found in the cytoplasm. The enzyme catalyses L-threonine + NAD(+) = (2S)-2-amino-3-oxobutanoate + NADH + H(+). The protein operates within amino-acid degradation; L-threonine degradation via oxydo-reductase pathway; glycine from L-threonine: step 1/2. Functionally, catalyzes the NAD(+)-dependent oxidation of L-threonine to 2-amino-3-ketobutyrate. This chain is L-threonine 3-dehydrogenase, found in Anaeromyxobacter sp. (strain K).